The sequence spans 355 residues: Protein RecA (355 aa).

Gly67–Thr74 lines the ATP pocket.

This sequence belongs to the RecA family.

Its subcellular location is the cytoplasm. In terms of biological role, can catalyze the hydrolysis of ATP in the presence of single-stranded DNA, the ATP-dependent uptake of single-stranded DNA by duplex DNA, and the ATP-dependent hybridization of homologous single-stranded DNAs. It interacts with LexA causing its activation and leading to its autocatalytic cleavage. This Shewanella piezotolerans (strain WP3 / JCM 13877) protein is Protein RecA.